The sequence spans 422 residues: UDP-N-acetylglucosamine 1-carboxyvinyltransferase (422 aa).

Residue 22 to 23 (KN) coordinates phosphoenolpyruvate. Arg-95 provides a ligand contact to UDP-N-acetyl-alpha-D-glucosamine. Cys-119 functions as the Proton donor in the catalytic mechanism. Residue Cys-119 is modified to 2-(S-cysteinyl)pyruvic acid O-phosphothioketal. UDP-N-acetyl-alpha-D-glucosamine is bound by residues 124–128 (RPIDQ), Asp-309, and Val-331.

It belongs to the EPSP synthase family. MurA subfamily.

It localises to the cytoplasm. It catalyses the reaction phosphoenolpyruvate + UDP-N-acetyl-alpha-D-glucosamine = UDP-N-acetyl-3-O-(1-carboxyvinyl)-alpha-D-glucosamine + phosphate. Its pathway is cell wall biogenesis; peptidoglycan biosynthesis. Cell wall formation. Adds enolpyruvyl to UDP-N-acetylglucosamine. This Anaeromyxobacter dehalogenans (strain 2CP-C) protein is UDP-N-acetylglucosamine 1-carboxyvinyltransferase.